The chain runs to 203 residues: Probable nicotinate-nucleotide adenylyltransferase (203 aa).

This sequence belongs to the NadD family.

It catalyses the reaction nicotinate beta-D-ribonucleotide + ATP + H(+) = deamido-NAD(+) + diphosphate. Its pathway is cofactor biosynthesis; NAD(+) biosynthesis; deamido-NAD(+) from nicotinate D-ribonucleotide: step 1/1. Catalyzes the reversible adenylation of nicotinate mononucleotide (NaMN) to nicotinic acid adenine dinucleotide (NaAD). This is Probable nicotinate-nucleotide adenylyltransferase from Clostridium kluyveri (strain ATCC 8527 / DSM 555 / NBRC 12016 / NCIMB 10680 / K1).